Here is a 294-residue protein sequence, read N- to C-terminus: F-box protein SKIP3 (294 aa).

The region spanning 21 to 67 (SSTLDSLPEGCISNIISFTSPEDACVAAAVSKIFESAVKSDIVWEKF) is the F-box domain.

Part of a SCF (SKP1-cullin-F-box) protein ligase complex. Interacts with SKP1A/ASK1.

It participates in protein modification; protein ubiquitination. This Arabidopsis thaliana (Mouse-ear cress) protein is F-box protein SKIP3 (SKIP3).